The primary structure comprises 312 residues: DNA-directed RNA polymerase subunit alpha (312 aa).

The tract at residues 1 to 226 (MIEFKKPNIT…EHFKAFESAD (226 aa)) is alpha N-terminal domain (alpha-NTD). The alpha C-terminal domain (alpha-CTD) stretch occupies residues 243–312 (KEKKLEMTIE…DLGLSLRQED (70 aa)).

The protein belongs to the RNA polymerase alpha chain family. In terms of assembly, homodimer. The RNAP catalytic core consists of 2 alpha, 1 beta, 1 beta' and 1 omega subunit. When a sigma factor is associated with the core the holoenzyme is formed, which can initiate transcription.

The enzyme catalyses RNA(n) + a ribonucleoside 5'-triphosphate = RNA(n+1) + diphosphate. In terms of biological role, DNA-dependent RNA polymerase catalyzes the transcription of DNA into RNA using the four ribonucleoside triphosphates as substrates. This chain is DNA-directed RNA polymerase subunit alpha, found in Lactobacillus delbrueckii subsp. bulgaricus (strain ATCC BAA-365 / Lb-18).